Consider the following 458-residue polypeptide: NADH-ubiquinone oxidoreductase chain 4 (458 aa).

Helical transmembrane passes span 22–42, 63–83, 96–116, 117–137, 150–170, 194–214, 224–244, 257–277, 284–306, 311–333, 350–370, 391–413, and 434–454; these read FFWTAFISSSFLMPFLFFIFT, MISAPLVFLSLWMLPLMALAS, LLYITILIIMQTLLILTFLST, NLMNFYILFESSLIPILLIIF, IYLSFYTLIGSLPLLASLLFL, ILWLGCFSALLIKTPLYGFHL, TIAGSMTLAALMLKLGGYGMI, LSLILISIALWGAVMTSFICL, ALIAYSSVSHMGLMTASIMTLSL, GAFIMMIAHGLSSSALFFLANSN, MLLPLTSLWWLFIILTNLAMP, LTFPFLALTMVITTTYSMSMFML, and LTLFLHLFPMIAIMAYPNMII.

The protein belongs to the complex I subunit 4 family.

The protein localises to the mitochondrion membrane. It catalyses the reaction a ubiquinone + NADH + 5 H(+)(in) = a ubiquinol + NAD(+) + 4 H(+)(out). Core subunit of the mitochondrial membrane respiratory chain NADH dehydrogenase (Complex I) that is believed to belong to the minimal assembly required for catalysis. Complex I functions in the transfer of electrons from NADH to the respiratory chain. The immediate electron acceptor for the enzyme is believed to be ubiquinone. This is NADH-ubiquinone oxidoreductase chain 4 (MT-ND4) from Myxine glutinosa (Atlantic hagfish).